A 367-amino-acid chain; its full sequence is MVKTRAILEEYKTYVPGRSKKEIAEEYGVAEESIIKLGSNENPWGPSPKAKQAIIDSIDEINRYPESNHEYIKEQIAKYANVTKDQVIIGGDGADELFEVLAKTVIDEGDEFIVHQPTYTYYEYTFKQSNAKAVYATWNIEENKLDVDSVLNNITDKTKVIFLCTPNNPTGGLIPQEDIVRIIEATDALVVIDEAYWEFSEVNNVNLLKKYNNIFIIRTFSKVMGLAGLRIGYGLSNPDFIEKMSRIKPVFSVTVPSQKAVIATLNDEEFIKESTEKAITEREYLYESVNSIDNIHIYKSKSNYLLMDVRKTGYTAAELTSKLMSRGVIVRDCTSFVGLDEYYIRISVETHPKNEKFIEILKEIVEN.

Lys-222 is subject to N6-(pyridoxal phosphate)lysine.

It belongs to the class-II pyridoxal-phosphate-dependent aminotransferase family. Histidinol-phosphate aminotransferase subfamily. Pyridoxal 5'-phosphate is required as a cofactor.

The catalysed reaction is L-histidinol phosphate + 2-oxoglutarate = 3-(imidazol-4-yl)-2-oxopropyl phosphate + L-glutamate. It functions in the pathway amino-acid biosynthesis; L-histidine biosynthesis; L-histidine from 5-phospho-alpha-D-ribose 1-diphosphate: step 7/9. The polypeptide is Histidinol-phosphate aminotransferase (Methanosphaera stadtmanae (strain ATCC 43021 / DSM 3091 / JCM 11832 / MCB-3)).